We begin with the raw amino-acid sequence, 246 residues long: O-antigen export system ATP-binding protein RfbB (246 aa).

The region spanning 22-246 is the ABC transporter domain; it reads SGIKDLIFHP…IIELYKQAMA (225 aa). 63 to 70 is an ATP binding site; the sequence is GRNGAGKS.

The protein belongs to the ABC transporter superfamily.

The protein localises to the cell inner membrane. Functionally, may form an ATP-driven O-antigen export apparatus, in association with RfbA. This Klebsiella pneumoniae protein is O-antigen export system ATP-binding protein RfbB (rfbB).